The primary structure comprises 376 residues: Erythronate-4-phosphate dehydrogenase (376 aa).

Substrate-binding residues include Ser-45 and Thr-67. Asp-147 is a binding site for NAD(+). Arg-209 is an active-site residue. Residue Asp-233 participates in NAD(+) binding. Residue Glu-238 is part of the active site. His-255 acts as the Proton donor in catalysis. Gly-258 contributes to the NAD(+) binding site. Residue Tyr-259 coordinates substrate.

It belongs to the D-isomer specific 2-hydroxyacid dehydrogenase family. PdxB subfamily. As to quaternary structure, homodimer.

It localises to the cytoplasm. It carries out the reaction 4-phospho-D-erythronate + NAD(+) = (R)-3-hydroxy-2-oxo-4-phosphooxybutanoate + NADH + H(+). Its pathway is cofactor biosynthesis; pyridoxine 5'-phosphate biosynthesis; pyridoxine 5'-phosphate from D-erythrose 4-phosphate: step 2/5. In terms of biological role, catalyzes the oxidation of erythronate-4-phosphate to 3-hydroxy-2-oxo-4-phosphonooxybutanoate. This Shewanella baltica (strain OS185) protein is Erythronate-4-phosphate dehydrogenase.